The primary structure comprises 1846 residues: C2 domain-containing protein (1846 aa).

The segment at 16 to 36 (NTEKEEGKNAEINENNDPNTQ) is disordered. Residues 17–26 (TEKEEGKNAE) show a composition bias toward basic and acidic residues. Residues 27-36 (INENNDPNTQ) are compositionally biased toward polar residues. One can recognise a C2 domain in the interval 497 to 623 (VPRYRQRGDI…FNEKNVRRNK (127 aa)). Composition is skewed to basic and acidic residues over residues 1193–1211 (DEHTDIDTEKKKHEKDNYK) and 1230–1243 (KDDHHHITDKKVSK). Disordered regions lie at residues 1193–1244 (DEHT…VSKS), 1346–1370 (KYTINEKRDDIKTKKKRSKEKKKQD), 1456–1635 (KNER…KKRV), 1652–1692 (NEKM…NNER), and 1827–1846 (EEPSSKKSPQKKKIVIVRKN). The stretch at 1349–1506 (INEKRDDIKT…DENMKEEQKM (158 aa)) forms a coiled coil. Composition is skewed to basic and acidic residues over residues 1456–1474 (KNERNKMEKSYKRMIQKDK), 1481–1629 (ESRD…MRRE), 1652–1663 (NEKMKKKEEKEE), and 1670–1692 (KEDIEDKYKIGKEASLDENNNER). Over residues 1834-1846 (SPQKKKIVIVRKN) the composition is skewed to basic residues.

Its subcellular location is the membrane. Its function is as follows. Binds calcium and phospholipids. Regulates microneme secretion. This Plasmodium falciparum (isolate 3D7) protein is C2 domain-containing protein.